We begin with the raw amino-acid sequence, 210 residues long: RNA chaperone ProQ (210 aa).

Residues 98–127 (HAKASLEESKAKVAARRKEQAKKAREEAKA) show a composition bias toward basic and acidic residues. The tract at residues 98-155 (HAKASLEESKAKVAARRKEQAKKAREEAKAKKPARATTPPKRRPQPAAVAKKQEKPVE) is disordered.

It belongs to the ProQ family.

The protein resides in the cytoplasm. Its function is as follows. RNA chaperone with significant RNA binding, RNA strand exchange and RNA duplexing activities. This chain is RNA chaperone ProQ, found in Aliivibrio salmonicida (strain LFI1238) (Vibrio salmonicida (strain LFI1238)).